A 123-amino-acid chain; its full sequence is Small ribosomal subunit protein uS12 (123 aa).

The interval 9-32 (ANPREVQKSRKKVPALQQSPQKRG) is disordered. D89 carries the post-translational modification 3-methylthioaspartic acid.

Belongs to the universal ribosomal protein uS12 family. Part of the 30S ribosomal subunit. Contacts proteins S8 and S17. May interact with IF1 in the 30S initiation complex.

Its function is as follows. With S4 and S5 plays an important role in translational accuracy. Functionally, interacts with and stabilizes bases of the 16S rRNA that are involved in tRNA selection in the A site and with the mRNA backbone. Located at the interface of the 30S and 50S subunits, it traverses the body of the 30S subunit contacting proteins on the other side and probably holding the rRNA structure together. The combined cluster of proteins S8, S12 and S17 appears to hold together the shoulder and platform of the 30S subunit. This Bradyrhizobium sp. (strain BTAi1 / ATCC BAA-1182) protein is Small ribosomal subunit protein uS12.